The sequence spans 1522 residues: Paired amphipathic helix protein pst1 (1522 aa).

A disordered region spans residues 139–174 (TILSSTDSNIPRPGTVKSSASPFVPNQNPSAPPPPP). The PAH 1 domain occupies 178–248 (RQLNVTDALS…QGFNTFLPPG (71 aa)). The tract at residues 307–339 (QSSASHPVLQPPAPSTLQFNPSPSPAAPSYPPV) is disordered. Pro residues predominate over residues 328-337 (SPSPAAPSYP). The 71-residue stretch at 345–415 (QAADLDQAIN…EEFKRFLPDV (71 aa)) folds into the PAH 2 domain. 3 disordered regions span residues 422 to 504 (ETQD…AFNV), 928 to 968 (AREN…DESS), and 1343 to 1522 (SGKA…KDDL). Polar residues predominate over residues 426 to 441 (KSTVVPQESATATPKR). Position 442 is a phosphoserine (Ser-442). Residues 442–468 (SPSATPTSALPPIGKFAPPTTAKAQPA) are compositionally biased toward low complexity. Thr-446 bears the Phosphothreonine mark. The PAH 3 domain maps to 504 to 576 (VPIAQNKNPS…NWLKDLVKYN (73 aa)). The segment covering 928–960 (ARENRSSVKEDYVSESTERTPDASEIDEHISEH) has biased composition (basic and acidic residues). A compositionally biased stretch (polar residues) spans 1385 to 1398 (GKSSVTRGNKTNLK). Over residues 1403–1432 (RNNDDSSNKINLSEKEKEKESIEDEEKNRE) the composition is skewed to basic and acidic residues. Ser-1443 carries the phosphoserine modification. The segment covering 1461–1474 (TSSHRPERSSEKKS) has biased composition (basic and acidic residues). Over residues 1478–1487 (VFTSVKQTAE) the composition is skewed to polar residues. A compositionally biased stretch (acidic residues) spans 1488 to 1522 (NDADNEDDKTDMDDQTEETLDADNTMEEEPSKDDL).

It localises to the nucleus. Functionally, has a role in modulating the nuclear import of TF1 virus-like particles. Essential for viability. This is Paired amphipathic helix protein pst1 (pst1) from Schizosaccharomyces pombe (strain 972 / ATCC 24843) (Fission yeast).